A 298-amino-acid chain; its full sequence is Glyoxalase domain-containing protein 4 (298 aa).

The region spanning 5–130 (RALHFVFKVG…GGYKFYLQDR (126 aa)) is the VOC 1 domain. Lys-109 carries the post-translational modification N6-succinyllysine. Residue Ser-131 is modified to Phosphoserine. One can recognise a VOC 2 domain in the interval 137 to 258 (PVLKVTLAVS…DGHEICFVGD (122 aa)). Lys-273 bears the N6-succinyllysine mark.

This sequence belongs to the glyoxalase I family. In terms of assembly, interacts with NUDT9.

It localises to the mitochondrion. The sequence is that of Glyoxalase domain-containing protein 4 (Glod4) from Rattus norvegicus (Rat).